We begin with the raw amino-acid sequence, 108 residues long: Large ribosomal subunit protein uL24 (108 aa).

Belongs to the universal ribosomal protein uL24 family. Part of the 50S ribosomal subunit.

Functionally, one of two assembly initiator proteins, it binds directly to the 5'-end of the 23S rRNA, where it nucleates assembly of the 50S subunit. One of the proteins that surrounds the polypeptide exit tunnel on the outside of the subunit. The chain is Large ribosomal subunit protein uL24 from Pelobacter propionicus (strain DSM 2379 / NBRC 103807 / OttBd1).